A 224-amino-acid chain; its full sequence is Glutathione S-transferase Mu 5 (224 aa).

Residues 4-91 (KSMVLGYWDI…YIARKHNMCG (88 aa)) form the GST N-terminal domain. Ser-5 carries the phosphoserine modification. Glutathione contacts are provided by residues 10-11 (YW), 49-53 (WLDVK), 62-63 (NL), and 75-76 (QS). The 119-residue stretch at 93–211 (TEEEKIRVDI…QSDRFFKMPI (119 aa)) folds into the GST C-terminal domain. Position 119 (Tyr-119) interacts with substrate.

The protein belongs to the GST superfamily. Mu family. As to quaternary structure, homodimer. Interacts with PFKM isoform 2 and isoform 3 (via N-terminal testis-specific region).

It is found in the cytoplasm. The enzyme catalyses RX + glutathione = an S-substituted glutathione + a halide anion + H(+). Functionally, conjugation of reduced glutathione to a wide number of exogenous and endogenous hydrophobic electrophiles. This chain is Glutathione S-transferase Mu 5 (Gstm5), found in Mus musculus (Mouse).